Reading from the N-terminus, the 361-residue chain is Phenylalanine--tRNA ligase alpha subunit (361 aa).

Glu-260 is a binding site for Mg(2+).

It belongs to the class-II aminoacyl-tRNA synthetase family. Phe-tRNA synthetase alpha subunit type 1 subfamily. In terms of assembly, tetramer of two alpha and two beta subunits. Mg(2+) is required as a cofactor.

The protein resides in the cytoplasm. The catalysed reaction is tRNA(Phe) + L-phenylalanine + ATP = L-phenylalanyl-tRNA(Phe) + AMP + diphosphate + H(+). The polypeptide is Phenylalanine--tRNA ligase alpha subunit (Allorhizobium ampelinum (strain ATCC BAA-846 / DSM 112012 / S4) (Agrobacterium vitis (strain S4))).